We begin with the raw amino-acid sequence, 521 residues long: Chromaffin granule amine transporter (521 aa).

Residues 1-21 (MLQVVLGAPQRLLKEGRQSRK) lie on the Cytoplasmic side of the membrane. The helical transmembrane segment at 22 to 42 (LVLVVVFVALLLDNMLLTVVV) threads the bilayer. Residues 43–135 (PIVPTFLYAT…IEFLEEENVR (93 aa)) lie on the Lumenal, vesicle side of the membrane. 3 N-linked (GlcNAc...) asparagine glycosylation sites follow: Asn58, Asn87, and Asn104. Residues 136 to 155 (IGILFASKALMQLLVNPFVG) form a helical membrane-spanning segment. The Cytoplasmic portion of the chain corresponds to 156–164 (PLTNRIGYH). Residues 165–185 (IPMFVGFMIMFLSTLMFAFSG) traverse the membrane as a helical segment. At 186–194 (TYALLFVAR) the chain is on the lumenal, vesicle side. Residues 195-215 (TLQGIGSSFSSVAGLGMLASV) form a helical membrane-spanning segment. Over 216-224 (YTDNYERGR) the chain is Cytoplasmic. A helical transmembrane segment spans residues 225-247 (AMGIALGGLALGLLVGAPFGSVM). At 248–253 (YEFVGK) the chain is on the lumenal, vesicle side. A helical transmembrane segment spans residues 254–276 (SSPFLILAFLALLDGALQLCILW). The Cytoplasmic segment spans residues 277-296 (PSKVSPESAMGTSLLTLLKD). A helical membrane pass occupies residues 297–316 (PYILVAAGSICLANMGVAIL). Residues 317–332 (EPTLPIWMMQTMCSPE) lie on the Lumenal, vesicle side of the membrane. The chain crosses the membrane as a helical span at residues 333–357 (WQLGLAFLPASVAYLIGTNLFGVLA). Residues 358-362 (NKMGR) lie on the Cytoplasmic side of the membrane. The helical transmembrane segment at 363–383 (WLCSLVGMVAVGISLLCVPLA) threads the bilayer. Over 384–394 (HNIFGLIGPNA) the chain is Lumenal, vesicle. A helical membrane pass occupies residues 395–415 (GLGFAIGMVDSSLMPIMGYLV). Residues 416-419 (DLRH) are Cytoplasmic-facing. Residues 420 to 440 (TSVYGSVYAIADVAFCVGFAI) form a helical membrane-spanning segment. Residues 441–445 (GPSTG) are Lumenal, vesicle-facing. A helical membrane pass occupies residues 446–467 (GVIVQVIGFPWLMVIIGTINII). At 468–521 (YAPLCCFLQNPPAKEEKRAILSQECPTETQMYTFQKPTKAFPLGENSDDPSSGE) the chain is on the cytoplasmic side.

Belongs to the major facilitator superfamily. Vesicular transporter family. In terms of tissue distribution, adrenal gland.

Its subcellular location is the cytoplasmic vesicle. The protein localises to the secretory vesicle membrane. It is found in the secretory vesicle. It localises to the synaptic vesicle membrane. It catalyses the reaction serotonin(in) + 2 H(+)(out) = serotonin(out) + 2 H(+)(in). The catalysed reaction is (R)-noradrenaline(in) + 2 H(+)(out) = (R)-noradrenaline(out) + 2 H(+)(in). It carries out the reaction dopamine(in) + 2 H(+)(out) = dopamine(out) + 2 H(+)(in). Its activity is regulated as follows. Strongly inhibited by reserpine, ketanserin and methamphetamine. Also inhibited weakly by tetrabenazine. Its function is as follows. Electrogenic antiporter that exchanges one cationic monoamine with two intravesicular protons across the membrane of secretory and synaptic vesicles. Uses the electrochemical proton gradient established by the V-type proton-pump ATPase to accumulate high concentrations of monoamines inside the vesicles prior to their release via exocytosis. Transports catecholamines and indolamines with higher affinity for serotonin. Regulates the transvesicular monoaminergic gradient that determines the quantal size. Mediates presynaptic monoaminergic vesicle transport in the amygdala and prefrontal brain regions related with emotion processing in response to environmental stimuli. In Rattus norvegicus (Rat), this protein is Chromaffin granule amine transporter (Slc18a1).